A 467-amino-acid chain; its full sequence is MPSVFIKTFGCQMNVRDSEQVLQDFIERGYQIASSEKWADIILINTCSVRAMAEEKAIDKLASLKTAKKKNPNLVLGIIGCMAQNRGREIAEKYRFVDLVLGTQKFHKVAEIADNLLKNPDRSSSYVDLSKEEAAHNAINKHLSTKAQPIAYVSIMQGCSMHCSFCIVPTTRGEERSRPIDEIFEEVKRLAETSVKEIVLLGQIVNRYGAKEFPWVKGKSPFVQLLEKLSTIEEIKRIRFTSPHPLGFKEDLIAALRDIPQLCEHVHLPVQSGSDKILKAMRRGYSRSKFLSLVDKLRKAIPQLALSTDIIVGYPGETEEDFQQTCSLLNEVRFDNAFIFRYSAREGTTAASLGDQLSEEVKFERNYRLLEIQNKITMEKAQKWVGQVVEILVEGESKKNASKFQGRTRTNHLVIIPKNERWRGEFLPVRIVETTGHTFYGTPLISGIDEALQFDLQEEINPAPIVS.

Residues Pro2 to Lys118 enclose the MTTase N-terminal domain. [4Fe-4S] cluster contacts are provided by Cys11, Cys47, Cys81, Cys159, Cys163, and Cys166. Positions Thr145–Glu379 constitute a Radical SAM core domain. A TRAM domain is found at Gln382–Ile445.

Belongs to the methylthiotransferase family. MiaB subfamily. In terms of assembly, monomer. The cofactor is [4Fe-4S] cluster.

The protein resides in the cytoplasm. The catalysed reaction is N(6)-dimethylallyladenosine(37) in tRNA + (sulfur carrier)-SH + AH2 + 2 S-adenosyl-L-methionine = 2-methylsulfanyl-N(6)-dimethylallyladenosine(37) in tRNA + (sulfur carrier)-H + 5'-deoxyadenosine + L-methionine + A + S-adenosyl-L-homocysteine + 2 H(+). Functionally, catalyzes the methylthiolation of N6-(dimethylallyl)adenosine (i(6)A), leading to the formation of 2-methylthio-N6-(dimethylallyl)adenosine (ms(2)i(6)A) at position 37 in tRNAs that read codons beginning with uridine. The protein is tRNA-2-methylthio-N(6)-dimethylallyladenosine synthase of Methylacidiphilum infernorum (isolate V4) (Methylokorus infernorum (strain V4)).